Reading from the N-terminus, the 187-residue chain is Oligoribonuclease (187 aa).

The region spanning 7-170 (LIWIDLEMTG…DDIKDSINEL (164 aa)) is the Exonuclease domain. Y128 is an active-site residue.

Belongs to the oligoribonuclease family.

It is found in the cytoplasm. 3'-to-5' exoribonuclease specific for small oligoribonucleotides. The protein is Oligoribonuclease of Legionella pneumophila (strain Paris).